Consider the following 411-residue polypeptide: Fructose-1,6-bisphosphatase, chloroplastic (411 aa).

Residues 1–53 (MAATAGATPSSHLLLSSSRHVAASPQPRILFPSLSGKRVAVGKNHHATGVRCM) constitute a chloroplast transit peptide. The Mg(2+) site is built by E133, E162, D183, L185, and D186. Residue 186 to 189 (DGSS) participates in substrate binding. Residues C227 and C232 are joined by a disulfide bond. Residues N291, Y323, Y341, Y343, and K353 each coordinate substrate. Residue E359 coordinates Mg(2+).

This sequence belongs to the FBPase class 1 family. In terms of assembly, homotetramer. Mg(2+) serves as cofactor.

The protein localises to the plastid. The protein resides in the chloroplast stroma. The enzyme catalyses beta-D-fructose 1,6-bisphosphate + H2O = beta-D-fructose 6-phosphate + phosphate. It functions in the pathway carbohydrate biosynthesis; Calvin cycle. The chain is Fructose-1,6-bisphosphatase, chloroplastic (FBP) from Brassica napus (Rape).